Consider the following 248-residue polypeptide: Cytochrome c oxidase subunit 2 (248 aa).

Residues 1 to 36 (MLFFNSILNDAPSSWALYFQDGASPSYLGVTHLNDY) are Mitochondrial intermembrane-facing. The chain crosses the membrane as a helical span at residues 37 to 57 (LMFYLTFIFIGVIYAICKAVI). Over 58 to 75 (EYNYNSHPIAAKYTTHGS) the chain is Mitochondrial matrix. The helical transmembrane segment at 76 to 100 (IVEFIWTLIPALILILVALPSFKLL) threads the bilayer. Residues 101–248 (YLLDEVQKPS…DFLAWLEENS (148 aa)) lie on the Mitochondrial intermembrane side of the membrane. Cu cation contacts are provided by histidine 182, cysteine 217, glutamate 219, cysteine 221, histidine 225, and methionine 228. Glutamate 219 serves as a coordination point for Mg(2+).

This sequence belongs to the cytochrome c oxidase subunit 2 family. As to quaternary structure, component of the cytochrome c oxidase (complex IV, CIV), a multisubunit enzyme composed of a catalytic core of 3 subunits and several supernumerary subunits. The complex exists as a monomer or a dimer and forms supercomplexes (SCs) in the inner mitochondrial membrane with ubiquinol-cytochrome c oxidoreductase (cytochrome b-c1 complex, complex III, CIII). Requires Cu cation as cofactor.

It is found in the mitochondrion inner membrane. It catalyses the reaction 4 Fe(II)-[cytochrome c] + O2 + 8 H(+)(in) = 4 Fe(III)-[cytochrome c] + 2 H2O + 4 H(+)(out). Functionally, component of the cytochrome c oxidase, the last enzyme in the mitochondrial electron transport chain which drives oxidative phosphorylation. The respiratory chain contains 3 multisubunit complexes succinate dehydrogenase (complex II, CII), ubiquinol-cytochrome c oxidoreductase (cytochrome b-c1 complex, complex III, CIII) and cytochrome c oxidase (complex IV, CIV), that cooperate to transfer electrons derived from NADH and succinate to molecular oxygen, creating an electrochemical gradient over the inner membrane that drives transmembrane transport and the ATP synthase. Cytochrome c oxidase is the component of the respiratory chain that catalyzes the reduction of oxygen to water. Electrons originating from reduced cytochrome c in the intermembrane space (IMS) are transferred via the dinuclear copper A center (CU(A)) of subunit 2 and heme A of subunit 1 to the active site in subunit 1, a binuclear center (BNC) formed by heme A3 and copper B (CU(B)). The BNC reduces molecular oxygen to 2 water molecules using 4 electrons from cytochrome c in the IMS and 4 protons from the mitochondrial matrix. This is Cytochrome c oxidase subunit 2 (cox2) from Schizosaccharomyces pombe (strain 972 / ATCC 24843) (Fission yeast).